Here is a 295-residue protein sequence, read N- to C-terminus: MDLLKFSSLAISEINFLHESSFDSIDHSWFLLIGCKLDQDDEIYIPINGNEAESQWYIEKVIRIPMQENDKINQERLERRINLTKVTQKDICILGILDLCQLEEDENITNKVTEKVLTQLTALALKYLIKYNVFRQHTSFQEAVNSLKGYKIENSVQIGAEIILDFLQDKVQIKDVNDRYQIPTPNNTVDPGFDEFQLIDMKDKEINIQKYNNNTIRKLLEKINRMIIFLKNYDATDKPFSSTQDVILRKISMLVTQLQRGGTSDMNYLLDNKINEIKLLEISCKQWEISNMLKK.

As to quaternary structure, component of a COP9 signalosome-like (CSN) complex, composed of RRI1/CSN5, CSN9, RRI2/CSN10, PCI8/CSN11, CSN12 and CSI1. In the complex, it probably interacts directly with CSN9 and CSN12. Interacts also with RPN5.

The protein resides in the cytoplasm. The protein localises to the nucleus. Functionally, component of the COP9 signalosome (CSN) complex that acts as an regulator of the ubiquitin (Ubl) conjugation pathway by mediating the deneddylation of the cullin subunit of SCF-type E3 ubiquitin-protein ligase complexes The CSN complex is involved in the regulation of the mating pheromone response. This is Cop9 signalosome-interactor 1 (CSI1) from Saccharomyces cerevisiae (strain ATCC 204508 / S288c) (Baker's yeast).